The primary structure comprises 105 residues: ATP synthase subunit c (105 aa).

A run of 3 helical transmembrane segments spans residues 3–23, 32–52, and 78–98; these read FLAL…GGMD, SILG…IGMG, and VAMA…IIAI.

Belongs to the ATPase C chain family. As to quaternary structure, F-type ATPases have 2 components, F(1) - the catalytic core - and F(0) - the membrane proton channel. F(1) has five subunits: alpha(3), beta(3), gamma(1), delta(1), epsilon(1). F(0) has three main subunits: a(1), b(2) and c(10-14). The alpha and beta chains form an alternating ring which encloses part of the gamma chain. F(1) is attached to F(0) by a central stalk formed by the gamma and epsilon chains, while a peripheral stalk is formed by the delta and b chains.

Its subcellular location is the cell inner membrane. Functionally, f(1)F(0) ATP synthase produces ATP from ADP in the presence of a proton or sodium gradient. F-type ATPases consist of two structural domains, F(1) containing the extramembraneous catalytic core and F(0) containing the membrane proton channel, linked together by a central stalk and a peripheral stalk. During catalysis, ATP synthesis in the catalytic domain of F(1) is coupled via a rotary mechanism of the central stalk subunits to proton translocation. Key component of the F(0) channel; it plays a direct role in translocation across the membrane. A homomeric c-ring of between 10-14 subunits forms the central stalk rotor element with the F(1) delta and epsilon subunits. The sequence is that of ATP synthase subunit c from Helicobacter acinonychis (strain Sheeba).